Consider the following 252-residue polypeptide: MGNKNIKPSKENRLSILSKDKMDSFKRGSWATSSFREKSRATIQRFSSLRREHIKVDHPDKFLELKRGIYKIIQKSSSIDVDKRTKLMSNIKTMMINPFMIEGLMTSLENLDPDNKMSYSSVMILGEFDIINISDNEAAFEFINSLLKSLLLLNTRQLKLLEYSISNDLLYAHINALEYIIKNTFNVPERQLILRGQYLTPIFSDLLKYAGLTIKSNILMWNKQFIKPVSDLYTSMRLLHCVTESYKVIGMG.

Belongs to the orthopoxvirus A47 protein family.

The polypeptide is Protein A47 (Vaccinia virus (strain Western Reserve) (VACV)).